We begin with the raw amino-acid sequence, 217 residues long: Translation initiation factor IF-3 (217 aa).

The protein belongs to the IF-3 family. As to quaternary structure, monomer.

Its subcellular location is the cytoplasm. Its function is as follows. IF-3 binds to the 30S ribosomal subunit and shifts the equilibrium between 70S ribosomes and their 50S and 30S subunits in favor of the free subunits, thus enhancing the availability of 30S subunits on which protein synthesis initiation begins. The polypeptide is Translation initiation factor IF-3 (Synechococcus sp. (strain CC9902)).